Here is a 548-residue protein sequence, read N- to C-terminus: Glucose-6-phosphate isomerase (548 aa).

Glu353 serves as the catalytic Proton donor. Active-site residues include His384 and Lys512.

The protein belongs to the GPI family.

Its subcellular location is the cytoplasm. It carries out the reaction alpha-D-glucose 6-phosphate = beta-D-fructose 6-phosphate. The protein operates within carbohydrate biosynthesis; gluconeogenesis. It participates in carbohydrate degradation; glycolysis; D-glyceraldehyde 3-phosphate and glycerone phosphate from D-glucose: step 2/4. Its function is as follows. Catalyzes the reversible isomerization of glucose-6-phosphate to fructose-6-phosphate. The polypeptide is Glucose-6-phosphate isomerase (Pseudoalteromonas translucida (strain TAC 125)).